The sequence spans 560 residues: MKVWMAILISILCWQSSVWAVCPAWSPARAQEEISRLQQQIKQWDDDYWKEGKSEVEDGVYDQLSARLTQWQRCFVSEPRDVMMPPLNGAVMHPVAHTGVRKMADKNALSLWMRERSDLWVQPKVDGVAVTLVYRDGKLNKAISRGNGLKGEDWTQKVSLISAVPQTVSGPLANSTLQGEIFLQREGHIQQQMGGINARAKVAGLMMRQGNSDTLNSLAVFVWAWPDGPQLMTDRLKELATAGFTLTQRYTRAVKNADEVARVRNEWWKAKLPFVTDGVVVRGAKEPESRHWLPGQAEWLVAWKYQPVAQVAEVKAIQFAVGKSGKISVVASLAPVMLDDKKVQRVNIGSVRRWQEWDIAPGDQILVSLAGQGIPRIDDVVWRGAERTKPTPPENRFNPLTCYFASDVCQEQFISRLVWLGSKQVLGLDGIGEAGWRALHQTHRFEHIFSWLLLTPEQLQNTPGIAKSKSAQLWHQFNLARNQPFTRWVMAMGIPLTRAALNASDERSWSQLLFSTEQFWQQLPGTGSGRARQVIEWKENAQIKKLGSWLAAQQITGFEP.

K124 functions as the N6-AMP-lysine intermediate in the catalytic mechanism.

The protein belongs to the NAD-dependent DNA ligase family. LigB subfamily.

The catalysed reaction is NAD(+) + (deoxyribonucleotide)n-3'-hydroxyl + 5'-phospho-(deoxyribonucleotide)m = (deoxyribonucleotide)n+m + AMP + beta-nicotinamide D-nucleotide.. Catalyzes the formation of phosphodiester linkages between 5'-phosphoryl and 3'-hydroxyl groups in double-stranded DNA using NAD as a coenzyme and as the energy source for the reaction. This Shigella flexneri serotype 5b (strain 8401) protein is DNA ligase B.